A 156-amino-acid chain; its full sequence is Small ribosomal subunit protein uS7 (156 aa).

It belongs to the universal ribosomal protein uS7 family. In terms of assembly, part of the 30S ribosomal subunit. Contacts proteins S9 and S11.

Functionally, one of the primary rRNA binding proteins, it binds directly to 16S rRNA where it nucleates assembly of the head domain of the 30S subunit. Is located at the subunit interface close to the decoding center, probably blocks exit of the E-site tRNA. This is Small ribosomal subunit protein uS7 from Rubrobacter xylanophilus (strain DSM 9941 / JCM 11954 / NBRC 16129 / PRD-1).